Reading from the N-terminus, the 135-residue chain is Retinol-binding protein 5 (135 aa).

The protein belongs to the calycin superfamily. Fatty-acid binding protein (FABP) family. In terms of tissue distribution, kidney.

It is found in the cytoplasm. Its function is as follows. Intracellular transport of retinol. The chain is Retinol-binding protein 5 (RBP5) from Bos taurus (Bovine).